A 761-amino-acid polypeptide reads, in one-letter code: Autophagy-related protein 13 (761 aa).

3 stretches are compositionally biased toward low complexity: residues 1-10 (MLSDFKQQQQ), 290-303 (SSSVSPLSSGTSLK), and 327-340 (STSPPVQSPSISQP). Disordered stretches follow at residues 1 to 25 (MLSDFKQQQQQKHHSHNPPNSHDDT), 277 to 367 (FHKR…SNKS), 398 to 456 (ISGT…QSDL), 488 to 507 (DLRLGGGGGGGNSSVHNMSI), 544 to 642 (HSSR…SSIS), and 691 to 761 (YQNV…SRNF). Polar residues-rich tracts occupy residues 344-367 (PIQNQPSVPSSSLERRVSITSNKS) and 400-411 (GTSVPRSFSSST). A compositionally biased stretch (low complexity) spans 429–444 (RFASSFGSRASRRYSS). Residues 445-456 (TSIRQQTPQSDL) show a composition bias toward polar residues. Over residues 566 to 590 (QQQQQQQQNQQQSQSPHTNTTSSIH) the composition is skewed to low complexity. Residues 600 to 613 (RMKDARPRSEDHQQ) are compositionally biased toward basic and acidic residues. Residues 614–631 (TKFSAARRSSNISPTTAV) show a composition bias toward polar residues. Residues 632–642 (PSSIGTPSSIS) show a composition bias toward low complexity. Residues 695-709 (FDDDDEDDNDEEEGD) show a composition bias toward acidic residues. Residues 710–720 (REGNQLHEGRN) are compositionally biased toward basic and acidic residues. Residues 721-730 (STESSQNQSK) are compositionally biased toward polar residues.

It belongs to the ATG13 family. Fungi subfamily. In terms of assembly, interacts with ATG1 to form the ATG1-ATG13 kinase complex.

The protein localises to the cytoplasm. It localises to the preautophagosomal structure. Its function is as follows. Plays a key role in autophagy. Activates the atg1 kinase in a nutritional condition dependent manner through the TOR pathway, leading to autophagy. Also involved in cytoplasm to vacuole transport (Cvt) and more specifically in Cvt vesicle formation. Seems to play a role in the switching machinery regulating the conversion between the Cvt pathway and autophagy. Finally, plays an important role in biofilm formation and resistance to antifungal compounds such as fluconazole, itraconazole, terbinafine and caspofungin. The protein is Autophagy-related protein 13 of Candida albicans (strain SC5314 / ATCC MYA-2876) (Yeast).